Reading from the N-terminus, the 729-residue chain is MQSTSNHLWLLSDILGQGATANVFRGRHKKTGDLFAIKVFNNISFLRPVDVQMREFEVLKKLNHKNIVKLFAIEEETTTRHKVLIMEFCPCGSLYTVLEEPSNAYGLPESEFLIVLRDVVGGMNHLRENGIVHRDIKPGNIMRVIGEDGQSVYKLTDFGAARELEDDEQFVSLYGTEEYLHPDMYERAVLRKDHQKKYGATVDLWSIGVTFYHAATGSLPFRPFEGPRRNKEVMYKIITGKPSGAISGVQKAENGPIDWSGDMPVSCSLSRGLQVLLTPVLANILEADQEKCWGFDQFFAETSDILHRMVIHVFSLQQMTAHKIYIHSYNTATIFHELVYKQTKIISSNQELIYEGRRLVLEPGRLAQHFPKTTEENPIFVVSREPLNTIGLIYEKISLPKVHPRYDLDGDASMAKAITGVVCYACRIASTLLLYQELMRKGIRWLIELIKDDYNETVHKKTEVVITLDFCIRNIEKTVKVYEKLMKINLEAAELGEISDIHTKLLRLSSSQGTIETSLQDIDSRLSPGGSLADAWAHQEGTHPKDRNVEKLQVLLNCMTEIYYQFKKDKAERRLAYNEEQIHKFDKQKLYYHATKAMTHFTDECVKKYEAFLNKSEEWIRKMLHLRKQLLSLTNQCFDIEEEVSKYQEYTNELQETLPQKMFTASSGIKHTMTPIYPSSNTLVEMTLGMKKLKEEMEGVVKELAENNHILERFGSLTMDGGLRNVDCL.

Positions 9–310 (WLLSDILGQG…ETSDILHRMV (302 aa)) constitute a Protein kinase domain. Residue 15–23 (LGQGATANV) participates in ATP binding. Residue Lys30 forms a Glycyl lysine isopeptide (Lys-Gly) (interchain with G-Cter in ubiquitin) linkage. Lys38 contacts ATP. Asp135 serves as the catalytic Proton acceptor. Position 172 is a phosphoserine; by autocatalysis and IKKB (Ser172). The 77-residue stretch at 309-385 (MVIHVFSLQQ…ENPIFVVSRE (77 aa)) folds into the Ubiquitin-like domain. A Glycyl lysine isopeptide (Lys-Gly) (interchain with G-Cter in ubiquitin) cross-link involves residue Lys401. Coiled coils occupy residues 407 to 657 (DLDG…LQET) and 658 to 713 (LPQK…ILER). Lys607 carries the N6-methyllysine; by SETD4 modification. The interval 621–729 (RKMLHLRKQL…DGGLRNVDCL (109 aa)) is interaction with AZI2, TANK and TBKBP1. A Glycyl lysine isopeptide (Lys-Gly) (interchain with G-Cter in ubiquitin) cross-link involves residue Lys670. Ser716 bears the Phosphoserine mark.

Belongs to the protein kinase superfamily. Ser/Thr protein kinase family. I-kappa-B kinase subfamily. As to quaternary structure, homodimer. Interacts with DDX3X, TIRAP and TRAF2. Part of a ternary complex consisting of TANK, TRAF2 and TBK1. Interacts with AZI2, TANK and TBKBP1; these interactions are mutually exclusive and mediate TBK1 activation. Interacts with GSK3B; this interaction promotes TBK1 self-association and autophosphorylation. Interacts with SIKE1; SIKE1 is associated with TBK1 under physiological condition and dissociated from TBK1 upon viral infection or TLR3 stimulation. Interacts with IRF3, leading to IRF3 phosphorylation. Interacts with RIGI. Interacts with CYLD. Interacts with OPTN and TRAF3. Interacts with SRC. Interacts with the exocyst complex subunit SEC5/EXOC2; this interaction is sufficient to trigger TBK1 activity. Interacts with STING1, leading to STING1 phosphorylation. Interacts with IFIT3 (via N-terminus). Interacts with MAVS; interaction only takes place in the presence of IFIT3 and leads to MAVS phosphorylation. Interacts (via protein kinase domain) with TTLL12 (via TTL domain); the interaction prevents MAVS binding to TBK1. Interacts with TICAM1; this interaction is enhanced in the presence of WDFY1 and leads to TICAM1 phosphorylation. Interacts with TRIM26. Interacts with TRIM23. Interacts with TTC4 and IKBKE. Interacts with HNRNPA2B1. Interacts with DDX3X. Interacts with TRIM14. Interacts with CEP170; efficient complex formation may be dependent on the presence of CCDC61. Interacts with TRAF3IP3. Interacts with HSP90AA1; the interaction mediates TBK1 association with TOMM70. Interacts with TAX1BP1. Interacts with kinase IKBKB; the complex interacts with STAT1, leading to phosphorylation of STAT1 on 'Thr-749' by IKBKB. Interacts with ICOS; this interaction is critical for the maturation of T follicular regulatory cells. Interacts with RNF144B; this interaction prevents TBK1 phosphorylation and subsequent activation. Interacts with ASB8; this interaction promotes TBK1 proteasomal degradation. Forms a ternary complex with ZNF268 and SETD4; the interaction with SETD4 is ZNF268-dependent and leads to TBK1 monomethylation, which enhances its interaction with IRF3 and MAVS. (Microbial infection) Interacts with Borna disease virus (BDV) P protein leading to its phosphorylation. In terms of assembly, (Microbial infection) Interacts with Ebola virus protein VP35. As to quaternary structure, (Microbial infection) Interacts with HCV NS3; this interaction leads to inhibition of cellular antiviral response by blocking necessary interactions between the TBK1 and its substrates IRF3 and IRF7. (Microbial infection) Interacts with human herpesvirus 1 protein ICP34.5. In terms of assembly, (Microbial infection) Interacts with Zika virus non-structural protein 1/NS1 and non-structural protein 4B/NS4B. As to quaternary structure, (Microbial infection) Interacts with SARS-CoV-2 non-structural protein 6; this interaction decreases IRF3 phosphorylation by 57%, which leads to reduced IFN-beta (IFNB) production. Interacts with SARS-CoV-2 helicase; this interaction inhibits TBK1 phosphorylation and decreases IRF3 phosphorylation by 75%, which leads to reduced IFN-beta production. Interacts with SARS-CoV-2 M protein; the interaction promotes TBK1 degradation via 'Lys-48'-linked ubiquitination. (Microbial infection) Interacts with human cytomegalovirus protein UL35; this interaction inhibits type I interferon production. In terms of assembly, (Microbial infection) Interacts with heartland virus NSs; this interaction antagonizes TBK1 phosphorylation and inhibits TBK1-IRF3 interaction and thus the establishment of an antiviral state. As to quaternary structure, (Microbial infection) Interacts (via N-terminus) with Severe fever with thrombocytopenia virus (SFTSV) NSs; this interaction antagonizes TBK1 phosphorylation and sequesters TBK1 in NSs-induced cytoplasmic inclusion bodies thereby inhibiting the IFN responses. Post-translationally, autophosphorylation at Ser-172 activates the kinase, and is an essential step for virus-triggered signaling. Phosphorylated by IKBKB/IKKB at Ser-172. Phosphorylation requires homodimerization and ubiquitination at Lys-30 and Lys-401. Dephosphorylated at Ser-172 by PPM1B and this negatively regulates its role in mediating antiviral response. In terms of processing, 'Lys-63'-linked polyubiquitination by MIB1 after RNA virus infection, or by NRDP1 after LPS stimulation at Lys-30 and Lys-401, participates in kinase activation. 'Lys-48'-linked polyubiquitination at Lys-670 by DTX4 leads to proteasomal degradation. 'Lys-48'-linked polyubiquitination by TRAIP also leads to proteasomal degradation. 'Lys-48'-linked polyubiquitination by TRAF7; leading to proteasomal degradation. 'Lys-63'-linked polyubiquitination by RNF128 at Lys-30 and Lys-401 leads to the activation of antiviral responses. 'Lys-48'-linked polyubiquitination after 'lys-33'-linked deubiquitination by USP38 promotes TBK1 degradation. (Microbial infection) Interaction with SARS-CoV-2 M protein induces 'Lys-48'-linked ubiquitination which leads to proteasomal degradation. Post-translationally, (Microbial infection) Deubiquitinated by Epstein-Barr virus BPLF1 on both 'Lys-48' and 'Lys-63'-linked ubiquitin chains; leading to inhibition of type I interfewron production. In terms of processing, monomethylation at Lys-607 by SETD4 maximizes TBK1 activation and promotes efficient interferon signaling. Ubiquitous with higher expression in testis. Expressed in the ganglion cells, nerve fiber layer and microvasculature of the retina.

The protein resides in the cytoplasm. The catalysed reaction is L-seryl-[protein] + ATP = O-phospho-L-seryl-[protein] + ADP + H(+). It catalyses the reaction L-threonyl-[protein] + ATP = O-phospho-L-threonyl-[protein] + ADP + H(+). Serine/threonine kinase that plays an essential role in regulating inflammatory responses to foreign agents. Following activation of toll-like receptors by viral or bacterial components, associates with TRAF3 and TANK and phosphorylates interferon regulatory factors (IRFs) IRF3 and IRF7 as well as DDX3X. This activity allows subsequent homodimerization and nuclear translocation of the IRFs leading to transcriptional activation of pro-inflammatory and antiviral genes including IFNA and IFNB. In order to establish such an antiviral state, TBK1 form several different complexes whose composition depends on the type of cell and cellular stimuli. Plays a key role in IRF3 activation: acts by first phosphorylating innate adapter proteins MAVS, STING1 and TICAM1 on their pLxIS motif, leading to recruitment of IRF3, thereby licensing IRF3 for phosphorylation by TBK1. Phosphorylated IRF3 dissociates from the adapter proteins, dimerizes, and then enters the nucleus to induce expression of interferons. Thus, several scaffolding molecules including FADD, TRADD, MAVS, AZI2, TANK or TBKBP1/SINTBAD can be recruited to the TBK1-containing-complexes. Under particular conditions, functions as a NF-kappa-B effector by phosphorylating NF-kappa-B inhibitor alpha/NFKBIA, IKBKB or RELA to translocate NF-Kappa-B to the nucleus. Restricts bacterial proliferation by phosphorylating the autophagy receptor OPTN/Optineurin on 'Ser-177', thus enhancing LC3 binding affinity and antibacterial autophagy. Phosphorylates SMCR8 component of the C9orf72-SMCR8 complex, promoting autophagosome maturation. Phosphorylates ATG8 proteins MAP1LC3C and GABARAPL2, thereby preventing their delipidation and premature removal from nascent autophagosomes. Seems to play a role in energy balance regulation by sustaining a state of chronic, low-grade inflammation in obesity, which leads to a negative impact on insulin sensitivity. Attenuates retroviral budding by phosphorylating the endosomal sorting complex required for transport-I (ESCRT-I) subunit VPS37C. Phosphorylates Borna disease virus (BDV) P protein. Plays an essential role in the TLR3- and IFN-dependent control of herpes virus HSV-1 and HSV-2 infections in the central nervous system. Acts both as a positive and negative regulator of the mTORC1 complex, depending on the context: activates mTORC1 in response to growth factors by catalyzing phosphorylation of MTOR, while it limits the mTORC1 complex by promoting phosphorylation of RPTOR. Acts as a positive regulator of the mTORC2 complex by mediating phosphorylation of MTOR, leading to increased phosphorylation and activation of AKT1. Phosphorylates and activates AKT1. Involved in the regulation of TNF-induced RIPK1-mediated cell death, probably acting via CYLD phosphorylation that in turn controls RIPK1 ubiquitination status. Also participates in the differentiation of T follicular regulatory cells together with the receptor ICOS. In Homo sapiens (Human), this protein is Serine/threonine-protein kinase TBK1.